The sequence spans 197 residues: Nucleoside triphosphate pyrophosphatase (197 aa).

The Proton acceptor role is filled by Asp71.

It belongs to the Maf family. A divalent metal cation is required as a cofactor.

Its subcellular location is the cytoplasm. It carries out the reaction a ribonucleoside 5'-triphosphate + H2O = a ribonucleoside 5'-phosphate + diphosphate + H(+). The catalysed reaction is a 2'-deoxyribonucleoside 5'-triphosphate + H2O = a 2'-deoxyribonucleoside 5'-phosphate + diphosphate + H(+). In terms of biological role, nucleoside triphosphate pyrophosphatase. May have a dual role in cell division arrest and in preventing the incorporation of modified nucleotides into cellular nucleic acids. In Trichormus variabilis (strain ATCC 29413 / PCC 7937) (Anabaena variabilis), this protein is Nucleoside triphosphate pyrophosphatase.